Reading from the N-terminus, the 338-residue chain is Taste receptor type 2 member 39 (338 aa).

Residues 1-30 lie on the Extracellular side of the membrane; sequence MLGRCFPPDTKEKQQLRMTKLCDPAESELS. Residues 31-51 traverse the membrane as a helical segment; it reads PFLITLILAVLLAEYLIGIIA. At 52–74 the chain is on the cytoplasmic side; that stretch reads NGFIMAIHAAEWVQNKAVSTSGR. The chain crosses the membrane as a helical span at residues 75–95; the sequence is ILVFLSVSRIALQSLMMLEIT. Residues 96-116 are Extracellular-facing; the sequence is ISSTSLSFYSEDAVYYAFKIS. Residues 117–137 form a helical membrane-spanning segment; the sequence is FIFLNFCSLWFAAWLSFFYFV. Topologically, residues 138-156 are cytoplasmic; it reads KIANFSYPLFLKLRWRITG. A helical transmembrane segment spans residues 157–177; the sequence is LIPWLLWLSVFISFSHSMFCI. Over 178–205 the chain is Extracellular; sequence NIXTVYCNNSFPIHSSNSTKKTYLSEIN. Residues asparagine 185 and asparagine 194 are each glycosylated (N-linked (GlcNAc...) asparagine). Residues 206–226 form a helical membrane-spanning segment; the sequence is VVGLAFFFNLGIVTPLIMFIL. The Cytoplasmic portion of the chain corresponds to 227-262; sequence TATLLILSLKRHTLHMGSNATGSNDPSMEAHMGAIK. A helical membrane pass occupies residues 263 to 283; the sequence is ATSYFLILYIFNAVALFIYLS. The Extracellular portion of the chain corresponds to 284 to 291; it reads NMFDINSL. Residues 292–312 form a helical membrane-spanning segment; that stretch reads WNNLCQIIMAAYPASHSILLI. At 313–338 the chain is on the cytoplasmic side; it reads QDNPGLRRAWKRLQLRLHLYPKEWTL.

This sequence belongs to the G-protein coupled receptor T2R family.

The protein localises to the membrane. In terms of biological role, receptor that may play a role in the perception of bitterness and is gustducin-linked. May play a role in sensing the chemical composition of the gastrointestinal content. The activity of this receptor may stimulate alpha gustducin, mediate PLC-beta-2 activation and lead to the gating of TRPM5. The protein is Taste receptor type 2 member 39 (TAS2R39) of Gorilla gorilla gorilla (Western lowland gorilla).